Consider the following 267-residue polypeptide: 3-deoxy-manno-octulosonate cytidylyltransferase 2 (267 aa).

Belongs to the KdsB family.

Its subcellular location is the cytoplasm. The enzyme catalyses 3-deoxy-alpha-D-manno-oct-2-ulosonate + CTP = CMP-3-deoxy-beta-D-manno-octulosonate + diphosphate. Its pathway is nucleotide-sugar biosynthesis; CMP-3-deoxy-D-manno-octulosonate biosynthesis; CMP-3-deoxy-D-manno-octulosonate from 3-deoxy-D-manno-octulosonate and CTP: step 1/1. It functions in the pathway bacterial outer membrane biogenesis; lipopolysaccharide biosynthesis. Functionally, activates KDO (a required 8-carbon sugar) for incorporation into bacterial lipopolysaccharide in Gram-negative bacteria. The chain is 3-deoxy-manno-octulosonate cytidylyltransferase 2 from Burkholderia ambifaria (strain MC40-6).